Consider the following 97-residue polypeptide: Putative membrane protein insertion efficiency factor (97 aa).

It belongs to the UPF0161 family.

Its subcellular location is the cell membrane. Functionally, could be involved in insertion of integral membrane proteins into the membrane. This is Putative membrane protein insertion efficiency factor from Lactobacillus gasseri (strain ATCC 33323 / DSM 20243 / BCRC 14619 / CIP 102991 / JCM 1131 / KCTC 3163 / NCIMB 11718 / NCTC 13722 / AM63).